Consider the following 311-residue polypeptide: Formimidoylglutamase (311 aa).

6 residues coordinate Mn(2+): His-122, Asp-151, His-153, Asp-155, Cys-242, and Asp-244.

Belongs to the arginase family. Homodimer. It depends on Mn(2+) as a cofactor.

It catalyses the reaction N-formimidoyl-L-glutamate + H2O = formamide + L-glutamate. It participates in amino-acid degradation; L-histidine degradation into L-glutamate; L-glutamate from N-formimidoyl-L-glutamate (hydrolase route): step 1/1. In terms of biological role, catalyzes the conversion of N-formimidoyl-L-glutamate to L-glutamate and formamide. The chain is Formimidoylglutamase from Pseudomonas aeruginosa (strain ATCC 15692 / DSM 22644 / CIP 104116 / JCM 14847 / LMG 12228 / 1C / PRS 101 / PAO1).